The primary structure comprises 161 residues: ATP synthase subunit b (161 aa).

The chain crosses the membrane as a helical span at residues 11-31; it reads AISFVLFVWFCMKYIWPPIIL.

The protein belongs to the ATPase B chain family. F-type ATPases have 2 components, F(1) - the catalytic core - and F(0) - the membrane proton channel. F(1) has five subunits: alpha(3), beta(3), gamma(1), delta(1), epsilon(1). F(0) has three main subunits: a(1), b(2) and c(10-14). The alpha and beta chains form an alternating ring which encloses part of the gamma chain. F(1) is attached to F(0) by a central stalk formed by the gamma and epsilon chains, while a peripheral stalk is formed by the delta and b chains.

It localises to the cell membrane. Its function is as follows. F(1)F(0) ATP synthase produces ATP from ADP in the presence of a proton or sodium gradient. F-type ATPases consist of two structural domains, F(1) containing the extramembraneous catalytic core and F(0) containing the membrane proton channel, linked together by a central stalk and a peripheral stalk. During catalysis, ATP synthesis in the catalytic domain of F(1) is coupled via a rotary mechanism of the central stalk subunits to proton translocation. Component of the F(0) channel, it forms part of the peripheral stalk, linking F(1) to F(0). The chain is ATP synthase subunit b from Buchnera aphidicola subsp. Acyrthosiphon pisum (strain APS) (Acyrthosiphon pisum symbiotic bacterium).